Here is a 209-residue protein sequence, read N- to C-terminus: Probable spore germination lipoprotein YlaJ (209 aa).

The N-terminal stretch at 1 to 16 is a signal peptide; the sequence is MRILFIIIQLTLILSA. The N-palmitoyl cysteine moiety is linked to residue cysteine 17. The S-diacylglycerol cysteine moiety is linked to residue cysteine 17. 2 disordered regions span residues 26–54 and 165–209; these read QNVEKESTRQQETKPIHVKDTTQETKDNG and NDVI…NNND. Basic and acidic residues-rich tracts occupy residues 28–54 and 183–209; these read VEKESTRQQETKPIHVKDTTQETKDNG and LNRKQQQEMEKEQNDQSDHHMKKNNND.

Its subcellular location is the forespore inner membrane. Probably contributes, directly or indirectly, to early events in germination. This chain is Probable spore germination lipoprotein YlaJ (ylaJ), found in Bacillus subtilis (strain 168).